The sequence spans 708 residues: ATP-dependent DNA helicase Hel308 (708 aa).

A Q motif motif is present at residues 1–29; that stretch reads MSIDDLKLPSNVIDIIKNRGIKKLNPPQT. ATP contacts are provided by residues Q28 and 46-53; that span reads SPTGSGKT. In terms of domain architecture, Helicase ATP-binding spans 33 to 196; it reads KKGLLDGNRL…WLGAEPVATN (164 aa). A DEAH box motif is present at residues 145–148; sequence DELH. In terms of domain architecture, Helicase C-terminal spans 229-435; it reads HGDDAIIAYT…ERAFYTFLLG (207 aa).

This sequence belongs to the helicase family. Hel308 subfamily. Monomer.

It catalyses the reaction Couples ATP hydrolysis with the unwinding of duplex DNA by translocating in the 3'-5' direction.. The catalysed reaction is ATP + H2O = ADP + phosphate + H(+). In terms of biological role, DNA-dependent ATPase and 3'-5' DNA helicase that may be involved in repair of stalled replication forks. This Saccharolobus solfataricus (strain ATCC 35092 / DSM 1617 / JCM 11322 / P2) (Sulfolobus solfataricus) protein is ATP-dependent DNA helicase Hel308.